Consider the following 235-residue polypeptide: Small ribosomal subunit protein uS2c (235 aa).

Belongs to the universal ribosomal protein uS2 family.

Its subcellular location is the plastid. It is found in the chloroplast. The chain is Small ribosomal subunit protein uS2c (rps2) from Anthoceros angustus (Hornwort).